The sequence spans 101 residues: Small ribosomal subunit protein uS14A (101 aa).

The disordered stretch occupies residues leucine 31–aspartate 67. The span at glutamate 38–arginine 53 shows a compositional bias: basic and acidic residues.

This sequence belongs to the universal ribosomal protein uS14 family. Part of the 30S ribosomal subunit. Contacts proteins S3 and S10.

In terms of biological role, binds 16S rRNA, required for the assembly of 30S particles and may also be responsible for determining the conformation of the 16S rRNA at the A site. This is Small ribosomal subunit protein uS14A from Streptomyces coelicolor (strain ATCC BAA-471 / A3(2) / M145).